A 401-amino-acid polypeptide reads, in one-letter code: Phosphoglycerate kinase (401 aa).

Residues 20–22 (DFN), R35, 58–61 (HLGR), R117, and R154 contribute to the substrate site. Residues K204, G298, E329, and 358–361 (GGDS) each bind ATP.

This sequence belongs to the phosphoglycerate kinase family. As to quaternary structure, monomer.

The protein resides in the cytoplasm. It catalyses the reaction (2R)-3-phosphoglycerate + ATP = (2R)-3-phospho-glyceroyl phosphate + ADP. The protein operates within carbohydrate degradation; glycolysis; pyruvate from D-glyceraldehyde 3-phosphate: step 2/5. This chain is Phosphoglycerate kinase, found in Bifidobacterium longum subsp. infantis (strain ATCC 15697 / DSM 20088 / JCM 1222 / NCTC 11817 / S12).